The primary structure comprises 454 residues: Glutamine synthetase (454 aa).

A GS beta-grasp domain is found at 19–111 (NNVKFIRFQF…VICDVYKDEK (93 aa)). Residues 118–454 (PRSRLKAILE…DWETGKYLIY (337 aa)) enclose the GS catalytic domain. Glutamate 142 and glutamate 144 together coordinate Mg(2+). Glutamate 194 contributes to the ATP binding site. Residues glutamate 199 and glutamate 206 each coordinate Mg(2+). Residues 250 to 251 (NG) and glycine 251 each bind L-glutamate. Histidine 255 provides a ligand contact to Mg(2+). ATP is bound by residues 257-259 (HQS) and serine 259. Residues arginine 309, glutamate 315, and arginine 327 each coordinate L-glutamate. Arginine 327, arginine 332, and lysine 339 together coordinate ATP. Glutamate 344 lines the Mg(2+) pocket. Residue arginine 346 participates in L-glutamate binding.

The protein belongs to the glutamine synthetase family. Oligomer of 12 subunits arranged in the form of two hexagons. The cofactor is Mg(2+).

It is found in the cytoplasm. The enzyme catalyses L-glutamate + NH4(+) + ATP = L-glutamine + ADP + phosphate + H(+). Feedback inhibited by glycine and alanine, and inhibited by low concentrations of methionine sulfoximine. In terms of biological role, probably involved in nitrogen metabolism via ammonium assimilation. Catalyzes the ATP-dependent biosynthesis of glutamine from glutamate and ammonia. Beta-glutamate is a much poorer substrate than alpha-glutamate. The chain is Glutamine synthetase from Methanocaldococcus jannaschii (strain ATCC 43067 / DSM 2661 / JAL-1 / JCM 10045 / NBRC 100440) (Methanococcus jannaschii).